The sequence spans 294 residues: Porphobilinogen deaminase (294 aa).

S-(dipyrrolylmethanemethyl)cysteine is present on Cys232.

It belongs to the HMBS family. As to quaternary structure, monomer. Dipyrromethane serves as cofactor.

The catalysed reaction is 4 porphobilinogen + H2O = hydroxymethylbilane + 4 NH4(+). The protein operates within porphyrin-containing compound metabolism; protoporphyrin-IX biosynthesis; coproporphyrinogen-III from 5-aminolevulinate: step 2/4. Tetrapolymerization of the monopyrrole PBG into the hydroxymethylbilane pre-uroporphyrinogen in several discrete steps. The protein is Porphobilinogen deaminase of Corynebacterium diphtheriae (strain ATCC 700971 / NCTC 13129 / Biotype gravis).